A 396-amino-acid polypeptide reads, in one-letter code: Purine ribonucleoside efflux pump NepI (396 aa).

The Cytoplasmic segment spans residues 1–21; the sequence is MSEFIAENRGADAITRPNWSA. A helical transmembrane segment spans residues 22-42; sequence VFSVAFCVACLIIVEFLPVSL. Topologically, residues 43-54 are periplasmic; the sequence is LTPMAQDLGISE. A helical membrane pass occupies residues 55–75; it reads GVAGQSVTVTAFVAMFASLFI. Topologically, residues 76–85 are cytoplasmic; the sequence is TQTIQATDRR. The helical transmembrane segment at 86-106 threads the bilayer; sequence YVVILFAVLLTLSCLLVSFAN. Position 107 (S107) is a topological domain, periplasmic. The helical transmembrane segment at 108-128 threads the bilayer; the sequence is FSLLLIGRACLGLALGGFWAI. Over 129–147 the chain is Cytoplasmic; sequence SASLTMRLVPPRTVPKALS. The chain crosses the membrane as a helical span at residues 148–168; sequence VIFGAVSIALVIAAPLGGFLG. Residues 169–175 lie on the Periplasmic side of the membrane; the sequence is ELIGWRN. A helical membrane pass occupies residues 176–196; it reads VFNAAAAMGVLCIFWIIKSLP. Residues 197–215 lie on the Cytoplasmic side of the membrane; it reads SLPGEPSHQKQNTFRLLQR. Residues 216–236 form a helical membrane-spanning segment; it reads PGVMAGMIAIFMSFAGQFAFF. Topologically, residues 237 to 255 are periplasmic; the sequence is TYIRPVYMNLAGFGVDGLT. Residues 256–276 traverse the membrane as a helical segment; the sequence is LVLLSFGIASFVGTSLSSFIL. Residues 277 to 281 lie on the Cytoplasmic side of the membrane; it reads KRSVK. A helical transmembrane segment spans residues 282-302; the sequence is LALAGAPFVLALSALVLTLWG. The Periplasmic segment spans residues 303-305; the sequence is SDK. A helical transmembrane segment spans residues 306–326; it reads IVATGVAIIWGLTFALIPVGW. Residues 327–343 lie on the Cytoplasmic side of the membrane; it reads STWITRSLADQAEKAGS. The chain crosses the membrane as a helical span at residues 344–364; sequence IQVAVIQLANTCGAAIGGYAL. Residues 365-366 are Periplasmic-facing; it reads DN. A helical membrane pass occupies residues 367 to 387; sequence IGLTSPLMLSGTLMLLTALLV. At 388-396 the chain is on the cytoplasmic side; that stretch reads TAKVKMKKS.

Belongs to the major facilitator superfamily. DHA1 family. NepI (TC 2.A.1.2.26) subfamily.

Its subcellular location is the cell inner membrane. It carries out the reaction inosine(in) + H(+)(out) = inosine(out) + H(+)(in). It catalyses the reaction guanosine(in) + H(+)(out) = guanosine(out) + H(+)(in). Its function is as follows. Involved in the efflux of purine ribonucleosides, such as inosine and guanosine. The polypeptide is Purine ribonucleoside efflux pump NepI (Escherichia coli O127:H6 (strain E2348/69 / EPEC)).